The following is a 280-amino-acid chain: Pyridoxal 5'-phosphate synthase subunit PdxS (280 aa).

D12 serves as a coordination point for D-ribose 5-phosphate. Residue K69 is the Schiff-base intermediate with D-ribose 5-phosphate of the active site. Residue G141 coordinates D-ribose 5-phosphate. R153 is a D-glyceraldehyde 3-phosphate binding site. Residues G202 and 223–224 (GS) contribute to the D-ribose 5-phosphate site.

This sequence belongs to the PdxS/SNZ family. In the presence of PdxT, forms a dodecamer of heterodimers.

It carries out the reaction aldehydo-D-ribose 5-phosphate + D-glyceraldehyde 3-phosphate + L-glutamine = pyridoxal 5'-phosphate + L-glutamate + phosphate + 3 H2O + H(+). The protein operates within cofactor biosynthesis; pyridoxal 5'-phosphate biosynthesis. Functionally, catalyzes the formation of pyridoxal 5'-phosphate from ribose 5-phosphate (RBP), glyceraldehyde 3-phosphate (G3P) and ammonia. The ammonia is provided by the PdxT subunit. Can also use ribulose 5-phosphate and dihydroxyacetone phosphate as substrates, resulting from enzyme-catalyzed isomerization of RBP and G3P, respectively. This Fusobacterium nucleatum subsp. nucleatum (strain ATCC 25586 / DSM 15643 / BCRC 10681 / CIP 101130 / JCM 8532 / KCTC 2640 / LMG 13131 / VPI 4355) protein is Pyridoxal 5'-phosphate synthase subunit PdxS.